Consider the following 234-residue polypeptide: UPF0502 protein Reut_B4455 (234 aa).

Belongs to the UPF0502 family.

The protein is UPF0502 protein Reut_B4455 of Cupriavidus pinatubonensis (strain JMP 134 / LMG 1197) (Cupriavidus necator (strain JMP 134)).